The primary structure comprises 477 residues: MQVLHVCSEMFPLLKTGGLADVVGALPAAQIAEGGDVRVLLPAFPDVRNGIPDSVLVAEIDSFAGRVGLRYGTYHGVGIYLIDAPWLYERPGSPYHDQSMNAYSDNHRRFALLGWMACELAKGLDRYWRPQVVHAHDWHAGLACAYLAANGHPARSVFTVHNLAYQGLFSAHHVPELWLPPSFFNIYGLEFYGQMSFLKAGLFYADHITAVSPTYAREITRPEFGYGMEGLLQERQRQGRLSGILNGVDDKIWDPSHDPRLTARYDADNLKNKAKNKLHLQKAMGLKVDESLPLFAVVSRLTSQKGLDLVLEALPALLEQGGQLALLGAGDAVLQQAFLAAAADYPEQVGVQIGYHEAFSHRIIGGADVIMVPSRFEPCGLTQLYGLKYGTLPLVRRTGGLADTVVDCALENLADGSASGFVFDDCDAVALGNAIRRAMVLWSRPKHWRHVQRHAMSVDFGWQVAAQEYLSLYQRLS.

An ADP-alpha-D-glucose-binding site is contributed by Lys15.

The protein belongs to the glycosyltransferase 1 family. Bacterial/plant glycogen synthase subfamily.

The enzyme catalyses [(1-&gt;4)-alpha-D-glucosyl](n) + ADP-alpha-D-glucose = [(1-&gt;4)-alpha-D-glucosyl](n+1) + ADP + H(+). Its pathway is glycan biosynthesis; glycogen biosynthesis. In terms of biological role, synthesizes alpha-1,4-glucan chains using ADP-glucose. In Serratia proteamaculans (strain 568), this protein is Glycogen synthase.